A 208-amino-acid polypeptide reads, in one-letter code: 3-demethoxyubiquinol 3-hydroxylase (208 aa).

The Fe cation site is built by Glu-57, Glu-87, His-90, Glu-139, Glu-171, and His-174.

It belongs to the COQ7 family. Fe cation serves as cofactor.

Its subcellular location is the cell membrane. It catalyses the reaction a 5-methoxy-2-methyl-3-(all-trans-polyprenyl)benzene-1,4-diol + AH2 + O2 = a 3-demethylubiquinol + A + H2O. It participates in cofactor biosynthesis; ubiquinone biosynthesis. Catalyzes the hydroxylation of 2-nonaprenyl-3-methyl-6-methoxy-1,4-benzoquinol during ubiquinone biosynthesis. The protein is 3-demethoxyubiquinol 3-hydroxylase of Burkholderia vietnamiensis (strain G4 / LMG 22486) (Burkholderia cepacia (strain R1808)).